The chain runs to 313 residues: Protein FixB (313 aa).

255–283 is an FAD binding site; that stretch reads LYLAVGISGQIQHMVGANASQTIFAINKD.

Belongs to the ETF alpha-subunit/FixB family. In terms of assembly, heterodimer of FixA and FixB.

The protein operates within amine and polyamine metabolism; carnitine metabolism. In terms of biological role, required for anaerobic carnitine reduction. May bring reductant to CaiA. The chain is Protein FixB from Escherichia coli (strain SMS-3-5 / SECEC).